A 617-amino-acid chain; its full sequence is Protein kinase STUNTED (617 aa).

A disordered region spans residues 162-187 (SSELSEGFSDKDLAKTTGQEKRKISG). The segment covering 169–184 (FSDKDLAKTTGQEKRK) has biased composition (basic and acidic residues). The region spanning 277–555 (FSLENLIGKG…RGEDDVSKWV (279 aa)) is the Protein kinase domain. ATP-binding positions include 283 to 291 (IGKGGCNEV) and Lys305. Phosphotyrosine is present on Tyr350. Catalysis depends on Asp399, which acts as the Proton acceptor. Ser403 carries the phosphoserine modification. Thr439 bears the Phosphothreonine mark. Phosphotyrosine is present on Tyr447. The tract at residues 590-617 (DSVSNSSLERSNNSLFSSSSSSSQELQS) is disordered. Positions 591-617 (SVSNSSLERSNNSLFSSSSSSSQELQS) are enriched in low complexity.

This sequence belongs to the protein kinase superfamily. Ser/Thr protein kinase family. Expressed ubiquitously, mostly in roots, to a lower extent in leaves, floral buds and stems, and, at low levels, in flowers and siliques.

It is found in the cytoplasm. Promotes cell proliferation in the gibberellic acid (GA) signaling pathway, acting downstream of RGA, and possibly through a negative regulation of two cyclin-dependent kinase inhibitors SIM and SMR1. This Arabidopsis thaliana (Mouse-ear cress) protein is Protein kinase STUNTED.